The sequence spans 239 residues: Small ribosomal subunit protein uS2 (239 aa).

This sequence belongs to the universal ribosomal protein uS2 family.

The chain is Small ribosomal subunit protein uS2 from Histophilus somni (strain 129Pt) (Haemophilus somnus).